A 356-amino-acid polypeptide reads, in one-letter code: tRNA N6-adenosine threonylcarbamoyltransferase (356 aa).

Fe cation contacts are provided by histidine 115 and histidine 119. Substrate contacts are provided by residues 138–142 (LVSGG), aspartate 171, glycine 184, and asparagine 283. Residue aspartate 311 participates in Fe cation binding.

The protein belongs to the KAE1 / TsaD family. Requires Fe(2+) as cofactor.

Its subcellular location is the cytoplasm. The catalysed reaction is L-threonylcarbamoyladenylate + adenosine(37) in tRNA = N(6)-L-threonylcarbamoyladenosine(37) in tRNA + AMP + H(+). Required for the formation of a threonylcarbamoyl group on adenosine at position 37 (t(6)A37) in tRNAs that read codons beginning with adenine. Is involved in the transfer of the threonylcarbamoyl moiety of threonylcarbamoyl-AMP (TC-AMP) to the N6 group of A37, together with TsaE and TsaB. TsaD likely plays a direct catalytic role in this reaction. This Prochlorococcus marinus (strain MIT 9303) protein is tRNA N6-adenosine threonylcarbamoyltransferase.